The sequence spans 125 residues: uncharacterized protein (125 aa).

Belongs to the HesB/IscA family.

This is an uncharacterized protein from Azospirillum brasilense.